Consider the following 195-residue polypeptide: Imidazoleglycerol-phosphate dehydratase (195 aa).

This sequence belongs to the imidazoleglycerol-phosphate dehydratase family.

It is found in the cytoplasm. The catalysed reaction is D-erythro-1-(imidazol-4-yl)glycerol 3-phosphate = 3-(imidazol-4-yl)-2-oxopropyl phosphate + H2O. Its pathway is amino-acid biosynthesis; L-histidine biosynthesis; L-histidine from 5-phospho-alpha-D-ribose 1-diphosphate: step 6/9. This Cereibacter sphaeroides (strain ATCC 17025 / ATH 2.4.3) (Rhodobacter sphaeroides) protein is Imidazoleglycerol-phosphate dehydratase.